The sequence spans 70 residues: MAVPKRKTTPSRRGMRRSHQALGVEAHAECSNCGEMKRPHHVCSHCGHYDGREVVAAGNSGKGLKTAVRA.

A compositionally biased stretch (basic residues) spans 1–19; sequence MAVPKRKTTPSRRGMRRSH. A disordered region spans residues 1 to 21; the sequence is MAVPKRKTTPSRRGMRRSHQA.

The protein belongs to the bacterial ribosomal protein bL32 family.

This is Large ribosomal subunit protein bL32 from Gluconobacter oxydans (strain 621H) (Gluconobacter suboxydans).